Reading from the N-terminus, the 569-residue chain is Vacuolar protein sorting-associated protein 45 homolog (569 aa).

It belongs to the STXBP/unc-18/SEC1 family. In terms of assembly, interacts with both SYP41 or SYP42 and VTI12, but in different domains of the trans-Golgi network. Does not interact on the pervacuolar compartment with VTI11, SYP21 or SYP22, or on the cis-Golgi with SYP31. Interacts at the trans-Golgi network (TGN) with the SYP41/SYP61/VTI12 SNARE complex. As to expression, highly expressed in roots, lower expression in leaves, stems and flowers.

The protein localises to the golgi apparatus. It localises to the trans-Golgi network membrane. It is found in the early endosome. Its function is as follows. Involved in the protein transport to the vacuole, probably at the level of vesicle fusion at the trans-Golgi network (TGN) and not in transport from the TGN to the prevacuolar compartment, by promoting the recycling of vacuolar sorting receptors back to the TGN. Involved in early endosomal vesicle trafficking, particularly at the trans-Golgi-network/early endosome (TGN/EE) thus residing in early endocytic route. Together with BIG5/BEN1 required for polar PIN-FORMED (PIN) proteins localization, for their dynamic repolarization, and consequently for auxin activity gradient formation and auxin-related developmental processes (e.g. embryonic patterning, organogenesis and vasculature venation patterning). Necessary for pollen germination and for cell expansion. Binds syntaxins. The polypeptide is Vacuolar protein sorting-associated protein 45 homolog (Arabidopsis thaliana (Mouse-ear cress)).